A 156-amino-acid polypeptide reads, in one-letter code: Small ribosomal subunit protein uS7c (156 aa).

The protein belongs to the universal ribosomal protein uS7 family. Part of the 30S ribosomal subunit.

The protein resides in the plastid. It localises to the cyanelle. In terms of biological role, one of the primary rRNA binding proteins, it binds directly to 16S rRNA where it nucleates assembly of the head domain of the 30S subunit. The sequence is that of Small ribosomal subunit protein uS7c (rps7) from Cyanophora paradoxa.